The primary structure comprises 674 residues: tRNA 5-methylaminomethyl-2-thiouridine biosynthesis bifunctional protein MnmC (674 aa).

A tRNA (mnm(5)s(2)U34)-methyltransferase region spans residues 1–237 (MLTSYQLESP…KREMTVGELN (237 aa)). The tract at residues 270-674 (VGAGLAGANT…IRDLKRSQIL (405 aa)) is FAD-dependent cmnm(5)s(2)U34 oxidoreductase.

In the N-terminal section; belongs to the methyltransferase superfamily. tRNA (mnm(5)s(2)U34)-methyltransferase family. The protein in the C-terminal section; belongs to the DAO family. It depends on FAD as a cofactor.

It is found in the cytoplasm. It carries out the reaction 5-aminomethyl-2-thiouridine(34) in tRNA + S-adenosyl-L-methionine = 5-methylaminomethyl-2-thiouridine(34) in tRNA + S-adenosyl-L-homocysteine + H(+). Its function is as follows. Catalyzes the last two steps in the biosynthesis of 5-methylaminomethyl-2-thiouridine (mnm(5)s(2)U) at the wobble position (U34) in tRNA. Catalyzes the FAD-dependent demodification of cmnm(5)s(2)U34 to nm(5)s(2)U34, followed by the transfer of a methyl group from S-adenosyl-L-methionine to nm(5)s(2)U34, to form mnm(5)s(2)U34. This Marinomonas sp. (strain MWYL1) protein is tRNA 5-methylaminomethyl-2-thiouridine biosynthesis bifunctional protein MnmC.